The following is a 287-amino-acid chain: Elongation factor Ts (287 aa).

An involved in Mg(2+) ion dislocation from EF-Tu region spans residues 80–83; it reads TDFL.

This sequence belongs to the EF-Ts family.

It is found in the cytoplasm. Functionally, associates with the EF-Tu.GDP complex and induces the exchange of GDP to GTP. It remains bound to the aminoacyl-tRNA.EF-Tu.GTP complex up to the GTP hydrolysis stage on the ribosome. The protein is Elongation factor Ts of Stutzerimonas stutzeri (strain A1501) (Pseudomonas stutzeri).